The chain runs to 359 residues: UDP-N-acetylglucosamine--N-acetylmuramyl-(pentapeptide) pyrophosphoryl-undecaprenol N-acetylglucosamine transferase (359 aa).

Residues 14-16 (TGG), Asn126, Arg166, Ser194, Ile248, and Gln293 contribute to the UDP-N-acetyl-alpha-D-glucosamine site.

Belongs to the glycosyltransferase 28 family. MurG subfamily.

It localises to the cell inner membrane. It carries out the reaction di-trans,octa-cis-undecaprenyl diphospho-N-acetyl-alpha-D-muramoyl-L-alanyl-D-glutamyl-meso-2,6-diaminopimeloyl-D-alanyl-D-alanine + UDP-N-acetyl-alpha-D-glucosamine = di-trans,octa-cis-undecaprenyl diphospho-[N-acetyl-alpha-D-glucosaminyl-(1-&gt;4)]-N-acetyl-alpha-D-muramoyl-L-alanyl-D-glutamyl-meso-2,6-diaminopimeloyl-D-alanyl-D-alanine + UDP + H(+). The protein operates within cell wall biogenesis; peptidoglycan biosynthesis. In terms of biological role, cell wall formation. Catalyzes the transfer of a GlcNAc subunit on undecaprenyl-pyrophosphoryl-MurNAc-pentapeptide (lipid intermediate I) to form undecaprenyl-pyrophosphoryl-MurNAc-(pentapeptide)GlcNAc (lipid intermediate II). This is UDP-N-acetylglucosamine--N-acetylmuramyl-(pentapeptide) pyrophosphoryl-undecaprenol N-acetylglucosamine transferase from Verminephrobacter eiseniae (strain EF01-2).